Reading from the N-terminus, the 226-residue chain is Histone H1.5 (226 aa).

Over residues 1 to 16 the composition is skewed to low complexity; sequence MSETAPAETATPAPVE. Residues 1–44 are disordered; it reads MSETAPAETATPAPVEKSPAKKKATKKAAGAGAAKRKATGPPVS. Serine 2 carries the N-acetylserine; partial modification. A Phosphoserine modification is found at serine 2. Position 11 is a phosphothreonine; by GSK3 (threonine 11). N6-acetyllysine is present on lysine 17. A Phosphoserine modification is found at serine 18. Lysine 27 bears the N6-methyllysine mark. At lysine 37 the chain carries N6-(beta-hydroxybutyryl)lysine; alternate. The residue at position 37 (lysine 37) is an N6-succinyllysine; alternate. Threonine 39 bears the Phosphothreonine mark. The H15 domain maps to 39-112; the sequence is TGPPVSELIT…GASGSFKLNK (74 aa). Lysine 49 is subject to N6-acetyllysine. Residue lysine 55 is modified to N6-(beta-hydroxybutyryl)lysine. Arginine 57 carries the citrulline modification. Position 67 is an N6-(beta-hydroxybutyryl)lysine (lysine 67). Lysine 78 carries the post-translational modification N6-acetyllysine. N6-(beta-hydroxybutyryl)lysine occurs at positions 88, 93, and 109. The interval 98–226 is disordered; it reads QTKGTGASGS…KAKKAAAKKK (129 aa). The segment covering 122-133 has biased composition (basic residues); that stretch reads KAKKAGAAKAKK. 2 positions are modified to phosphothreonine: threonine 138 and threonine 155. A compositionally biased stretch (basic residues) spans 140–161; sequence KKAKKAAGAKKAVKKTPKKAKK. Lysine 168 is modified (N6-acetyllysine). Over residues 169–187 the composition is skewed to basic residues; that stretch reads KVAKSPKKAKAAAKPKKAT. 2 positions are modified to phosphoserine: serine 173 and serine 189. Residues 194-226 are compositionally biased toward basic residues; it reads KAVKPKAAKPKAAKPKAAKPKAAKAKKAAAKKK.

It belongs to the histone H1/H5 family. In terms of assembly, interacts with MSX1. Post-translationally, H1 histones are progressively phosphorylated during the cell cycle, becoming maximally phosphorylated during late G2 phase and M phase, and being dephosphorylated sharply thereafter. Phosphorylated at Thr-11 by GSK3B during mitosis in prometaphase and dephosphorylated in telophase. Citrullination at Arg-57 (H1R54ci) by PADI4 takes place within the DNA-binding site of H1 and results in its displacement from chromatin and global chromatin decondensation, thereby promoting pluripotency and stem cell maintenance. As to expression, ubiquitous. Expressed in the majority of the cell lines tested and in testis.

Its subcellular location is the nucleus. It localises to the chromosome. In terms of biological role, histone H1 protein binds to linker DNA between nucleosomes forming the macromolecular structure known as the chromatin fiber. Histones H1 are necessary for the condensation of nucleosome chains into higher-order structured fibers. Also acts as a regulator of individual gene transcription through chromatin remodeling, nucleosome spacing and DNA methylation. The protein is Histone H1.5 of Homo sapiens (Human).